A 107-amino-acid chain; its full sequence is Large ribosomal subunit protein uL24 (107 aa).

It belongs to the universal ribosomal protein uL24 family. As to quaternary structure, part of the 50S ribosomal subunit.

Functionally, one of two assembly initiator proteins, it binds directly to the 5'-end of the 23S rRNA, where it nucleates assembly of the 50S subunit. Its function is as follows. One of the proteins that surrounds the polypeptide exit tunnel on the outside of the subunit. The sequence is that of Large ribosomal subunit protein uL24 from Nitratidesulfovibrio vulgaris (strain DSM 19637 / Miyazaki F) (Desulfovibrio vulgaris).